A 452-amino-acid chain; its full sequence is Probable alpha-galactosidase B (452 aa).

The N-terminal stretch at 1–24 (MLHRATTTAAAAAAAALLLCPVQA) is a signal peptide. A disulfide bond links cysteine 47 and cysteine 79. N-linked (GlcNAc...) asparagine glycans are attached at residues asparagine 87 and asparagine 138. A disulfide bridge links cysteine 129 with cysteine 159. Aspartate 157 serves as the catalytic Nucleophile. The N-linked (GlcNAc...) asparagine glycan is linked to asparagine 184. 231–235 (DWGQA) contributes to the substrate binding site. The active-site Proton donor is aspartate 253. Residues asparagine 292, asparagine 391, asparagine 409, and asparagine 410 are each glycosylated (N-linked (GlcNAc...) asparagine).

The protein belongs to the glycosyl hydrolase 27 family.

The protein localises to the secreted. It catalyses the reaction Hydrolysis of terminal, non-reducing alpha-D-galactose residues in alpha-D-galactosides, including galactose oligosaccharides, galactomannans and galactolipids.. Functionally, hydrolyzes a variety of simple alpha-D-galactoside as well as more complex molecules such as oligosaccharides and polysaccharides. The chain is Probable alpha-galactosidase B from Talaromyces emersonii (Thermophilic fungus).